Reading from the N-terminus, the 263-residue chain is Indole-3-glycerol phosphate synthase (263 aa).

It belongs to the TrpC family.

The enzyme catalyses 1-(2-carboxyphenylamino)-1-deoxy-D-ribulose 5-phosphate + H(+) = (1S,2R)-1-C-(indol-3-yl)glycerol 3-phosphate + CO2 + H2O. It participates in amino-acid biosynthesis; L-tryptophan biosynthesis; L-tryptophan from chorismate: step 4/5. This Aliarcobacter butzleri (strain RM4018) (Arcobacter butzleri) protein is Indole-3-glycerol phosphate synthase.